A 142-amino-acid chain; its full sequence is Heat shock protein HSP.16.4 (142 aa).

The sHSP domain maps to 27–142 (NLFNDLKSNL…KEIKTSIPIE (116 aa)).

Belongs to the small heat shock protein (HSP20) family.

The protein resides in the cytoplasm. This is Heat shock protein HSP.16.4 from Streptococcus thermophilus.